A 164-amino-acid polypeptide reads, in one-letter code: Phosphopantetheine adenylyltransferase (164 aa).

Residue Ser-10 participates in substrate binding. ATP contacts are provided by residues 10 to 11 (SF) and His-18. 3 residues coordinate substrate: Lys-42, Met-74, and Arg-88. Residues 89-91 (GLR), Glu-99, and 124-130 (YFFVSAR) each bind ATP.

The protein belongs to the bacterial CoaD family. Homohexamer. Mg(2+) is required as a cofactor.

The protein localises to the cytoplasm. The catalysed reaction is (R)-4'-phosphopantetheine + ATP + H(+) = 3'-dephospho-CoA + diphosphate. It functions in the pathway cofactor biosynthesis; coenzyme A biosynthesis; CoA from (R)-pantothenate: step 4/5. Its function is as follows. Reversibly transfers an adenylyl group from ATP to 4'-phosphopantetheine, yielding dephospho-CoA (dPCoA) and pyrophosphate. The protein is Phosphopantetheine adenylyltransferase of Anaeromyxobacter dehalogenans (strain 2CP-C).